Consider the following 286-residue polypeptide: Probable protein S-acyltransferase 16 (286 aa).

Transmembrane regions (helical) follow at residues 11 to 31 (PVTVVMLVIGFIYFASVFTFI) and 45 to 65 (NAAAFTALALMCIYNYSIAVF). Positions 97–147 (RYCQKCSHFKPPRAHHCRVCKRCVLRMDHHCIWINNCVGHTNYKVFFVFVV) constitute a DHHC domain. Catalysis depends on Cys127, which acts as the S-palmitoyl cysteine intermediate. Helical transmembrane passes span 141–161 (VFFVFVVYAVTACVYSLVLLV) and 182–202 (IYVISAFLLIPLSIALGVLLG).

It belongs to the DHHC palmitoyltransferase family.

The protein resides in the golgi apparatus membrane. It catalyses the reaction L-cysteinyl-[protein] + hexadecanoyl-CoA = S-hexadecanoyl-L-cysteinyl-[protein] + CoA. Its function is as follows. Palmitoyl acyltransferase. This chain is Probable protein S-acyltransferase 16 (PAT16), found in Arabidopsis thaliana (Mouse-ear cress).